The primary structure comprises 898 residues: Cilium assembly protein DZIP1 (898 aa).

The disordered stretch occupies residues 14 to 66 (DPPGTHSSAGIPSLLSSPQSQPSSGSQSRPAPSTMSGPLTSSGASTSIPPPFK). The span at 25 to 46 (PSLLSSPQSQPSSGSQSRPAPS) shows a compositional bias: low complexity. A compositionally biased stretch (polar residues) spans 47 to 60 (TMSGPLTSSGASTS). Positions 145–197 (LSISLQAAEERLLAEAREREQICVQLQKKTQDAKALKEELKQRKKIIASQQAM) form a coiled coil. Residues 207–230 (HKCQHCEKAFMNASFLQSHMQRRH) form a C2H2-type zinc finger. Coiled-coil stretches lie at residues 242-353 (NQKK…VQTQ) and 407-447 (SAVS…ISSK). The segment covering 435–463 (TSQNKQMKQISSKPPTITVQREGVSTPSP) has biased composition (polar residues). 3 disordered regions span residues 435 to 509 (TSQN…SWQK), 585 to 739 (EQRV…WTDG), and 773 to 878 (KSLE…DAGT). Residues 495–505 (SSISESPTENR) show a composition bias toward low complexity. The stretch at 573–590 (YRRALKEISHKLEQRVKE) forms a coiled coil. The segment covering 605 to 652 (VVQSRPRSSSFPSTVTRVMSGPASKQQRTPQPVPRSRTNVPHKTSTPL) has biased composition (polar residues). A compositionally biased stretch (acidic residues) spans 662–684 (SDEDSSEEEEEEEEEEESSDEES). Composition is skewed to polar residues over residues 685 to 715 (PQMQ…QSVR) and 723 to 734 (AEPTNVTTLSDS). The span at 797-815 (KPTDVRNTRQNAKKELKYS) shows a compositional bias: basic and acidic residues. Acidic residues predominate over residues 816–826 (DDDDDDDDDWD). A compositionally biased stretch (polar residues) spans 855 to 866 (DTSTSVWGSSTG).

Belongs to the DZIP C2H2-type zinc-finger protein family. As to expression, expressed throughout the embryo starting at 12 hours.

The protein resides in the cell projection. Its subcellular location is the cilium. It localises to the cytoplasm. The protein localises to the cytoskeleton. It is found in the cilium basal body. The protein resides in the microtubule organizing center. Its subcellular location is the centrosome. It localises to the centriole. The protein localises to the nucleus. Its function is as follows. Molecular adapter that recruits protein complexes required for cilium assembly and function to the cilium basal body. Required for establishment of left-right asymmetry during embryogenesis. Acts as a permissive factor that is required for the proper regulation of Hedgehog (Hh) target genes in response to Hh signals. Acts downstream of the Smoothened protein to modulate Gli activity in the somites of the developing embryo. This chain is Cilium assembly protein DZIP1 (dzip1), found in Danio rerio (Zebrafish).